Consider the following 190-residue polypeptide: Elongation factor P-like protein (190 aa).

Belongs to the elongation factor P family.

The polypeptide is Elongation factor P-like protein (Photorhabdus laumondii subsp. laumondii (strain DSM 15139 / CIP 105565 / TT01) (Photorhabdus luminescens subsp. laumondii)).